A 712-amino-acid chain; its full sequence is U11/U12 small nuclear ribonucleoprotein 48 kDa protein (712 aa).

The segment at 98–125 (FVRCPFDSNHFMPPEALFLHSLRCPNTL) adopts a CHHC U11-48K-type zinc-finger fold. Positions 101, 107, 117, and 121 each coordinate Zn(2+). Residues 562 to 712 (QSRSPIGNDQ…EDRYIPTEKE (151 aa)) form a disordered region. Basic and acidic residues-rich tracts occupy residues 585–595 (KQWKGENRADI), 603–614 (QNSDKVKRHDEY), 629–663 (KHSD…HSIE), 672–693 (SSRE…DRRS), and 702–712 (FEDRYIPTEKE).

Component of the U11/U12 snRNPs that are part of the U12-type spliceosome. Not found in the major spliceosome.

Its subcellular location is the nucleus. Functionally, likely involved in U12-type 5' splice site recognition. The polypeptide is U11/U12 small nuclear ribonucleoprotein 48 kDa protein (SNRNP48) (Arabidopsis thaliana (Mouse-ear cress)).